The chain runs to 353 residues: Putative glycosyltransferase TagX (353 aa).

The protein belongs to the glycosyltransferase 2 family.

This Staphylococcus aureus (strain MRSA252) protein is Putative glycosyltransferase TagX (tagX).